The following is a 700-amino-acid chain: ATP-dependent zinc metalloprotease FtsH (700 aa).

The Cytoplasmic segment spans residues 1 to 20; that stretch reads MSSDNGSGRQGGDRGGSTGY. Residues 21–41 form a helical membrane-spanning segment; sequence NLLMYLGFGAIIATLVALYVL. The Periplasmic portion of the chain corresponds to 42 to 171; the sequence is QMFQTSLDYT…FRHADPPGPW (130 aa). Residues 172-192 traverse the membrane as a helical segment; that stretch reads EQHSQLIIGMLLAAMLIYIVV. Over 193-700 the chain is Cytoplasmic; the sequence is RRLSAAGSPM…ITAPATERSG (508 aa). Residue 262–269 coordinates ATP; that stretch reads GPPGTGKT. His-484 is a Zn(2+) binding site. Glu-485 is an active-site residue. The Zn(2+) site is built by His-488 and Asp-561.

In the central section; belongs to the AAA ATPase family. It in the C-terminal section; belongs to the peptidase M41 family. As to quaternary structure, homohexamer. It depends on Zn(2+) as a cofactor.

The protein localises to the cell inner membrane. In terms of biological role, acts as a processive, ATP-dependent zinc metallopeptidase for both cytoplasmic and membrane proteins. Plays a role in the quality control of integral membrane proteins. The chain is ATP-dependent zinc metalloprotease FtsH from Pirellula staleyi (strain ATCC 27377 / DSM 6068 / ICPB 4128) (Pirella staleyi).